The sequence spans 455 residues: UDP-N-acetylmuramoylalanine--D-glutamate ligase (455 aa).

112 to 118 (GTNGKTT) contacts ATP.

This sequence belongs to the MurCDEF family.

It is found in the cytoplasm. It carries out the reaction UDP-N-acetyl-alpha-D-muramoyl-L-alanine + D-glutamate + ATP = UDP-N-acetyl-alpha-D-muramoyl-L-alanyl-D-glutamate + ADP + phosphate + H(+). It functions in the pathway cell wall biogenesis; peptidoglycan biosynthesis. Cell wall formation. Catalyzes the addition of glutamate to the nucleotide precursor UDP-N-acetylmuramoyl-L-alanine (UMA). This Trichormus variabilis (strain ATCC 29413 / PCC 7937) (Anabaena variabilis) protein is UDP-N-acetylmuramoylalanine--D-glutamate ligase.